Here is a 218-residue protein sequence, read N- to C-terminus: Large ribosomal subunit protein uL3 (218 aa).

A disordered region spans residues 121 to 163; sequence GYQKRHGFSRGPMTHGSKNHREPGSIGPGTTPGRIYPGKRMAG.

It belongs to the universal ribosomal protein uL3 family. As to quaternary structure, part of the 50S ribosomal subunit. Forms a cluster with proteins L14 and L19.

Functionally, one of the primary rRNA binding proteins, it binds directly near the 3'-end of the 23S rRNA, where it nucleates assembly of the 50S subunit. The protein is Large ribosomal subunit protein uL3 of Parasynechococcus marenigrum (strain WH8102).